Reading from the N-terminus, the 1132-residue chain is Tyrosine-protein kinase JAK2 (1132 aa).

The interval 1–239 (MGMACLTMTE…RYRFRRFIQQ (239 aa)) is interaction with cytokine/interferon/growth hormone receptors. Residues 37-380 (PVLQVYLYHS…GYYRLTADAH (344 aa)) enclose the FERM domain. Tyr-119 is modified (phosphotyrosine; by autocatalysis). 2 positions are modified to phosphotyrosine: Tyr-372 and Tyr-373. The region spanning 401–482 (HGPISMDFAI…SLKDLLNCYQ (82 aa)) is the SH2; atypical domain. Ser-523 is subject to Phosphoserine. The Protein kinase 1 domain occupies 545–809 (LIFNESLGQG…AVIRDLNSLF (265 aa)). A phosphotyrosine mark is found at Tyr-570 and Tyr-813. Residues 849–1126 (LKFLQQLGKG…RDLSLRVDQI (278 aa)) enclose the Protein kinase 2 domain. 855 to 863 (LGKGNFGSV) is a binding site for ATP. Tyr-868 carries the post-translational modification Phosphotyrosine; by autocatalysis. Residue Lys-882 participates in ATP binding. Phosphotyrosine; by autocatalysis occurs at positions 966 and 972. Asp-976 functions as the Proton acceptor in the catalytic mechanism. Phosphotyrosine; by autocatalysis is present on residues Tyr-1007 and Tyr-1008.

It belongs to the protein kinase superfamily. Tyr protein kinase family. JAK subfamily. In terms of assembly, interacts with IL23R, SKB1 and STAM2. Interacts with EPOR. Interacts with LYN. Interacts with SIRPA. Interacts with SH2B1. Interacts with TEC. Interacts with IFNGR2 (via intracellular domain). Interacts with LEPR (Isoform B). Interacts with HSP90AB1; promotes functional activation in a heat shock-dependent manner. Interacts with STRA6. Interacts with ASB2; the interaction targets JAK2 for Notch-induced proteasomal degradation. It depends on Mg(2+) as a cofactor. In terms of processing, autophosphorylated, leading to regulate its activity. Leptin promotes phosphorylation on tyrosine residues, including phosphorylation on Tyr-813. Autophosphorylation on Tyr-119 in response to EPO down-regulates its kinase activity. Autophosphorylation on Tyr-868, Tyr-966 and Tyr-972 in response to growth hormone (GH) are required for maximal kinase activity. Also phosphorylated by TEC. Phosphorylated on tyrosine residues in response to interferon gamma signaling. Phosphorylated on tyrosine residues in response to a signaling cascade that is activated by increased cellular retinol. Post-translationally, undergoes Notch-induced ubiquitination and subsequent proteasomal degradation which is mediated by ASB1 or ASB2, the substrate-recognition components of probable ECS E3 ubiquitin-protein ligase complexes. In terms of tissue distribution, ubiquitously expressed throughout most tissues.

The protein localises to the endomembrane system. It is found in the cytoplasm. Its subcellular location is the nucleus. It catalyses the reaction L-tyrosyl-[protein] + ATP = O-phospho-L-tyrosyl-[protein] + ADP + H(+). Regulated by autophosphorylation, can both activate or decrease activity. Heme regulates its activity by enhancing the phosphorylation on Tyr-1007 and Tyr-1008. Non-receptor tyrosine kinase involved in various processes such as cell growth, development, differentiation or histone modifications. Mediates essential signaling events in both innate and adaptive immunity. In the cytoplasm, plays a pivotal role in signal transduction via its association with type I receptors such as growth hormone (GHR), prolactin (PRLR), leptin (LEPR), erythropoietin (EPOR), thrombopoietin (THPO); or type II receptors including IFN-alpha, IFN-beta, IFN-gamma and multiple interleukins. Following ligand-binding to cell surface receptors, phosphorylates specific tyrosine residues on the cytoplasmic tails of the receptor, creating docking sites for STATs proteins. Subsequently, phosphorylates the STATs proteins once they are recruited to the receptor. Phosphorylated STATs then form homodimer or heterodimers and translocate to the nucleus to activate gene transcription. For example, cell stimulation with erythropoietin (EPO) during erythropoiesis leads to JAK2 autophosphorylation, activation, and its association with erythropoietin receptor (EPOR) that becomes phosphorylated in its cytoplasmic domain. Then, STAT5 (STAT5A or STAT5B) is recruited, phosphorylated and activated by JAK2. Once activated, dimerized STAT5 translocates into the nucleus and promotes the transcription of several essential genes involved in the modulation of erythropoiesis. Part of a signaling cascade that is activated by increased cellular retinol and that leads to the activation of STAT5 (STAT5A or STAT5B). In addition, JAK2 mediates angiotensin-2-induced ARHGEF1 phosphorylation. Plays a role in cell cycle by phosphorylating CDKN1B. Cooperates with TEC through reciprocal phosphorylation to mediate cytokine-driven activation of FOS transcription. In the nucleus, plays a key role in chromatin by specifically mediating phosphorylation of 'Tyr-41' of histone H3 (H3Y41ph), a specific tag that promotes exclusion of CBX5 (HP1 alpha) from chromatin. Up-regulates the potassium voltage-gated channel activity of KCNA3. The sequence is that of Tyrosine-protein kinase JAK2 from Rattus norvegicus (Rat).